A 288-amino-acid polypeptide reads, in one-letter code: Aminoglycoside N(3)-acetyltransferase VII (288 aa).

It belongs to the antibiotic N-acetyltransferase family.

It carries out the reaction a 2-deoxystreptamine antibiotic + acetyl-CoA = an N(3)-acetyl-2-deoxystreptamine antibiotic + CoA + H(+). Resistance to paromomycin. In Streptomyces paromomycinus (Streptomyces rimosus subsp. paromomycinus), this protein is Aminoglycoside N(3)-acetyltransferase VII (aacC7).